A 313-amino-acid chain; its full sequence is Protein FixB (313 aa).

255–283 (LYLAVGISGQIQHMVGANASQTIFAINKD) contacts FAD.

This sequence belongs to the ETF alpha-subunit/FixB family. In terms of assembly, heterodimer of FixA and FixB.

It participates in amine and polyamine metabolism; carnitine metabolism. In terms of biological role, required for anaerobic carnitine reduction. May bring reductant to CaiA. This chain is Protein FixB, found in Escherichia coli O139:H28 (strain E24377A / ETEC).